We begin with the raw amino-acid sequence, 825 residues long: AP-3 complex subunit delta (825 aa).

HEAT repeat units lie at residues 131–168, 169–205, 207–243, 244–281, 285–323, 324–360, 363–400, 469–513, 515–547, and 548–584; these read GLAR…QYPE, AISA…RAPK, YLEF…YEPR, LVKK…LVGH, DKLA…THPS, LVSA…KENI, IVKT…KSTY, EKRT…LAHR, LLQA…LWVE, and KIVS…IVNT. The tract at residues 787–825 is disordered; that stretch reads STNQGSMGDIVLETKSPIRVEKKKSKKKKKKKEKTSGKE. Positions 807–819 are enriched in basic residues; that stretch reads EKKKSKKKKKKKE.

It belongs to the adaptor complexes large subunit family. In terms of assembly, adaptor protein complex 3 (AP-3) is a heterotetramer composed of 2 large adaptins (apl5 and apl6), a medium adaptin (apm3) and a small adaptin (aps3).

The protein localises to the golgi apparatus. It localises to the cytoplasmic vesicle. It is found in the clathrin-coated vesicle membrane. In terms of biological role, part of the AP-3 complex, an adaptor-related complex which is not clathrin-associated. The complex is associated with the Golgi region as well as more peripheral structures. It facilitates the budding of vesicles from the Golgi membrane and may be directly involved in trafficking to the vacuole. In Schizosaccharomyces pombe (strain 972 / ATCC 24843) (Fission yeast), this protein is AP-3 complex subunit delta (apl5).